Here is a 292-residue protein sequence, read N- to C-terminus: MVVFSAASDSEKPGDAMSGADKGEEEYRKPAIPVANLNLAKSLRTLDAPEEFPEVIPLNVGGTYFTTRLSTLRRYEDTMLAAMFSGRHHIPRDAEGRYFIDRDGTYFGDILNFLREGELPQRDRVRAVHREAQYYAIGPLLENLEDTQPLTGEKVRQAFLDLLPYYKENLERIVEIAKLRAMQRKARFAKLKICVYKEEMPITPYERPLFNSLRFERSESEAKLFEHHCEVDVSFGPWEAVADVYDLLHCIVSDLAERGISADQQCIGVCDKHLINHYYCKRPIYEFKITWW.

The segment at Met-1 to Tyr-27 is disordered. In terms of domain architecture, BTB spans Ile-56–Leu-144.

The protein localises to the cell membrane. Its subcellular location is the cytoplasm. It is found in the cytosol. The polypeptide is BTB/POZ domain-containing protein KCTD7 (kctd7) (Danio rerio (Zebrafish)).